A 391-amino-acid polypeptide reads, in one-letter code: Chorismate synthase (391 aa).

Arg-48 contributes to the NADP(+) binding site. FMN-binding positions include Arg-126–Ser-128, Gly-287, Lys-302–Ser-306, and Arg-329.

The protein belongs to the chorismate synthase family. The cofactor is FMNH2.

It catalyses the reaction 5-O-(1-carboxyvinyl)-3-phosphoshikimate = chorismate + phosphate. The protein operates within metabolic intermediate biosynthesis; chorismate biosynthesis; chorismate from D-erythrose 4-phosphate and phosphoenolpyruvate: step 7/7. Its function is as follows. Catalyzes the anti-1,4-elimination of the C-3 phosphate and the C-6 proR hydrogen from 5-enolpyruvylshikimate-3-phosphate (EPSP) to yield chorismate, which is the branch point compound that serves as the starting substrate for the three terminal pathways of aromatic amino acid biosynthesis. This reaction introduces a second double bond into the aromatic ring system. The protein is Chorismate synthase of Sulfolobus acidocaldarius (strain ATCC 33909 / DSM 639 / JCM 8929 / NBRC 15157 / NCIMB 11770).